A 638-amino-acid polypeptide reads, in one-letter code: uncharacterized protein (638 aa).

A signal peptide spans 1 to 31; that stretch reads MKFIKFNDSTIDSFLFMMLTDLAKTLTKSEA. 4 stretches are compositionally biased toward basic and acidic residues: residues 247-256, 273-284, 301-310, and 329-342; these read EEKKAPKLSD, EEMPTWHRETEA, DLGKDASREG, and RKDY…ESQK. Disordered stretches follow at residues 247–285 and 301–354; these read EEKK…TEAP and DLGK…ADGK. The 188-residue stretch at 445–632 folds into the VWFA domain; it reads FTLLVDCSAS…DVLYPLLKKL (188 aa).

This is an uncharacterized protein from Bacillus subtilis (strain 168).